Here is a 163-residue protein sequence, read N- to C-terminus: Halocyanin (163 aa).

Residues Met1–Gly24 form the signal peptide. Cys25 is modified (N-acetylcysteine). A lipid anchor (S-archaeol cysteine) is attached at Cys25. The segment covering Asn26–Asn38 has biased composition (gly residues). The interval Asn26–Ala48 is disordered. The Plastocyanin-like domain occupies Ala48–Glu163. The Cu cation site is built by His110, Cys148, His151, and Met156.

It is found in the cell membrane. Functionally, electron donor. Binds one copper ion. This is Halocyanin (hcy) from Natronomonas pharaonis (Natronobacterium pharaonis).